Consider the following 103-residue polypeptide: Small ribosomal subunit protein uS10 (103 aa).

Belongs to the universal ribosomal protein uS10 family. As to quaternary structure, part of the 30S ribosomal subunit.

Functionally, involved in the binding of tRNA to the ribosomes. The chain is Small ribosomal subunit protein uS10 from Shewanella amazonensis (strain ATCC BAA-1098 / SB2B).